The chain runs to 70 residues: ATP synthase subunit c (70 aa).

Helical transmembrane passes span 3-23 (ALAAGIAMLAGLGVGIGIGIA) and 44-64 (LFFIGAALAEAVAIYSFVIAI).

The protein belongs to the ATPase C chain family. In terms of assembly, F-type ATPases have 2 components, F(1) - the catalytic core - and F(0) - the membrane proton channel. F(1) has five subunits: alpha(3), beta(3), gamma(1), delta(1), epsilon(1). F(0) has three main subunits: a(1), b(2) and c(10-14). The alpha and beta chains form an alternating ring which encloses part of the gamma chain. F(1) is attached to F(0) by a central stalk formed by the gamma and epsilon chains, while a peripheral stalk is formed by the delta and b chains.

Its subcellular location is the cell membrane. Its function is as follows. F(1)F(0) ATP synthase produces ATP from ADP in the presence of a proton or sodium gradient. F-type ATPases consist of two structural domains, F(1) containing the extramembraneous catalytic core and F(0) containing the membrane proton channel, linked together by a central stalk and a peripheral stalk. During catalysis, ATP synthesis in the catalytic domain of F(1) is coupled via a rotary mechanism of the central stalk subunits to proton translocation. Functionally, key component of the F(0) channel; it plays a direct role in translocation across the membrane. A homomeric c-ring of between 10-14 subunits forms the central stalk rotor element with the F(1) delta and epsilon subunits. This is ATP synthase subunit c from Caldicellulosiruptor saccharolyticus (strain ATCC 43494 / DSM 8903 / Tp8T 6331).